Here is a 661-residue protein sequence, read N- to C-terminus: Cyclic di-GMP phosphodiesterase PdeR (661 aa).

The 71-residue stretch at 109–179 (GLSFAEQVVS…RRNNRVFFRS (71 aa)) folds into the PAS domain. The GGDEF domain occupies 265–397 (NKVGVVYLDL…GRGQFCVFTP (133 aa)). The region spanning 406-658 (YLWLDTNLRK…AFERWYKRYL (253 aa)) is the EAL domain.

As to quaternary structure, interacts with DgcM and MlrA.

It catalyses the reaction 3',3'-c-di-GMP + H2O = 5'-phosphoguanylyl(3'-&gt;5')guanosine + H(+). Functionally, part of a signaling cascade that regulates curli biosynthesis. The cascade is composed of two cyclic-di-GMP (c-di-GMP) control modules, in which c-di-GMP controlled by the DgcE/PdeH pair (module I) regulates the activity of the DgcM/PdeR pair (module II), which in turn regulates activity of the transcription factor MlrA and expression of the master biofilm regulator csgD. PdeR acts as a trigger enzyme that connects modules I and II. It inhibits DgcM and MlrA by direct interaction. Inhibition is relieved when PdeR binds and degrades c-di-GMP generated by module I. The protein is Cyclic di-GMP phosphodiesterase PdeR of Escherichia coli (strain K12).